Here is a 528-residue protein sequence, read N- to C-terminus: Peptide chain release factor 3 (528 aa).

One can recognise a tr-type G domain in the interval 10 to 280; the sequence is AKRRTFGIIS…IDMAPAPGPR (271 aa). GTP contacts are provided by residues 19 to 26, 87 to 91, and 141 to 144; these read SHPDAGKT, DTPGH, and NKLD.

Belongs to the TRAFAC class translation factor GTPase superfamily. Classic translation factor GTPase family. PrfC subfamily.

It localises to the cytoplasm. Functionally, increases the formation of ribosomal termination complexes and stimulates activities of RF-1 and RF-2. It binds guanine nucleotides and has strong preference for UGA stop codons. It may interact directly with the ribosome. The stimulation of RF-1 and RF-2 is significantly reduced by GTP and GDP, but not by GMP. This is Peptide chain release factor 3 from Desulfotalea psychrophila (strain LSv54 / DSM 12343).